Reading from the N-terminus, the 500-residue chain is Probable cytosol aminopeptidase (500 aa).

2 residues coordinate Mn(2+): Lys-268 and Asp-273. The active site involves Lys-280. Asp-291, Asp-350, and Glu-352 together coordinate Mn(2+). Arg-354 is a catalytic residue.

This sequence belongs to the peptidase M17 family. Mn(2+) is required as a cofactor.

It is found in the cytoplasm. The catalysed reaction is Release of an N-terminal amino acid, Xaa-|-Yaa-, in which Xaa is preferably Leu, but may be other amino acids including Pro although not Arg or Lys, and Yaa may be Pro. Amino acid amides and methyl esters are also readily hydrolyzed, but rates on arylamides are exceedingly low.. It carries out the reaction Release of an N-terminal amino acid, preferentially leucine, but not glutamic or aspartic acids.. Presumably involved in the processing and regular turnover of intracellular proteins. Catalyzes the removal of unsubstituted N-terminal amino acids from various peptides. This is Probable cytosol aminopeptidase from Alkaliphilus metalliredigens (strain QYMF).